The following is a 444-amino-acid chain: Ribulose bisphosphate carboxylase (444 aa).

Lys-163 serves as the catalytic Proton acceptor. Substrate is bound at residue Lys-165. Positions 189, 191, and 192 each coordinate Mg(2+). Residue Lys-189 is modified to N6-carboxylysine. His-281 functions as the Proton acceptor in the catalytic mechanism. Residues Arg-282, His-314, 367–369, and 389–392 contribute to the substrate site; these read SGG and QLGG.

The protein belongs to the RuBisCO large chain family. Type III subfamily. In terms of assembly, homodimer or homodecamer. In contrast to form I RuBisCO, the form III RuBisCO is composed solely of large subunits. Mg(2+) is required as a cofactor.

The catalysed reaction is 2 (2R)-3-phosphoglycerate + 2 H(+) = D-ribulose 1,5-bisphosphate + CO2 + H2O. The enzyme catalyses D-ribulose 1,5-bisphosphate + O2 = 2-phosphoglycolate + (2R)-3-phosphoglycerate + 2 H(+). In terms of biological role, catalyzes the addition of molecular CO(2) and H(2)O to ribulose 1,5-bisphosphate (RuBP), generating two molecules of 3-phosphoglycerate (3-PGA). Functions in an archaeal AMP degradation pathway, together with AMP phosphorylase and R15P isomerase. The protein is Ribulose bisphosphate carboxylase of Thermococcus onnurineus (strain NA1).